Consider the following 417-residue polypeptide: Synaptic vesicle membrane protein VAT-1 homolog-like (417 aa).

Disordered stretches follow at residues 1–33 (MAKE…GSHR) and 382–417 (PTPL…PFIQ). Ser390 is modified (phosphoserine). A phosphothreonine mark is found at Thr391 and Thr393. Phosphoserine is present on Ser394. Over residues 395–405 (EAGEEEEDHEG) the composition is skewed to acidic residues. Over residues 406 to 417 (DSENKERMPFIQ) the composition is skewed to basic and acidic residues.

Belongs to the zinc-containing alcohol dehydrogenase family. Quinone oxidoreductase subfamily.

This is Synaptic vesicle membrane protein VAT-1 homolog-like (Vat1l) from Mus musculus (Mouse).